We begin with the raw amino-acid sequence, 508 residues long: uncharacterized protein (508 aa).

Residues 7 to 29 (ALAIVLALILSLALPELLFQLYP) form a helical membrane-spanning segment.

The protein resides in the membrane. This is an uncharacterized protein from Archaeoglobus fulgidus (strain ATCC 49558 / DSM 4304 / JCM 9628 / NBRC 100126 / VC-16).